The chain runs to 227 residues: Lipoprotein-releasing system ATP-binding protein LolD (227 aa).

In terms of domain architecture, ABC transporter spans 6-227 (LTSQKLYKSY…LHEGSLYARE (222 aa)). 42 to 49 (GPSGSGKS) provides a ligand contact to ATP.

This sequence belongs to the ABC transporter superfamily. Lipoprotein translocase (TC 3.A.1.125) family. The complex is composed of two ATP-binding proteins (LolD) and two transmembrane proteins (LolC and LolE).

It localises to the cell inner membrane. Its function is as follows. Part of the ABC transporter complex LolCDE involved in the translocation of mature outer membrane-directed lipoproteins, from the inner membrane to the periplasmic chaperone, LolA. Responsible for the formation of the LolA-lipoprotein complex in an ATP-dependent manner. The polypeptide is Lipoprotein-releasing system ATP-binding protein LolD (Legionella pneumophila (strain Paris)).